The chain runs to 293 residues: Epidermal growth factor-like protein 8 (293 aa).

Residues 1 to 25 (MGSRAELCTLLGGFSFLLLLIPGEG) form the signal peptide. One can recognise an EMI domain in the interval 34-112 (SQGVCSKQTL…RHPGALTCEA (79 aa)). Intrachain disulfides connect C38–C97, C65–C71, C96–C110, C114–C124, C118–C130, C132–C141, C148–C159, C155–C168, and C170–C183. An N-linked (GlcNAc...) asparagine glycan is attached at N50. The region spanning 111–142 (EAICAKPCLNGGVCVRPDQCECAPGWGGKHCH) is the EGF-like 1 domain. One can recognise an EGF-like 2; calcium-binding domain in the interval 144–184 (DVDECRTSITLCSHHCFNTAGSFTCGCPHDLVLGVDGRTCM). A coiled-coil region spans residues 195-232 (SILSVAVREAEKDERALKQEIHELRGRLERLEQWAGQA).

The protein localises to the secreted. The chain is Epidermal growth factor-like protein 8 (EGFL8) from Homo sapiens (Human).